The following is a 338-amino-acid chain: MGNWPHKHILTLSNFSIYDYKSVFELTERFKSLINAGTKKIPALQGNLITSIFFEASTRTRNSFELAAKRLSADVQSFSPSSSSLSKGETLIDTALTYAAMGSDILIIRHSSSHVPLEISKKLDATNTKTSVLNAGDGLHSHPSQGLLDLYTLIKFFSPELMKPEILYSKKILIVGDVLHSRVARSNLWALTAFGANVILCGPPTLIPEEFTSFVSSSPPNQLRDPISSRGSITISRSLEDSIKDADAVIVLRLQKERMMENLLSSIKSYSENYCLTPEKLSMNDKNIPILHPGPINRGIEISSRIVDEYPNCLINDQVSNGIPTRMALLYLLSKFNK.

Residues Arg-59 and Thr-60 each contribute to the carbamoyl phosphate site. Lys-87 contacts L-aspartate. Positions 109, 142, and 145 each coordinate carbamoyl phosphate. The L-aspartate site is built by Arg-182 and Arg-253. Residues Gly-294 and Pro-295 each coordinate carbamoyl phosphate.

Belongs to the aspartate/ornithine carbamoyltransferase superfamily. ATCase family. In terms of assembly, heterododecamer (2C3:3R2) of six catalytic PyrB chains organized as two trimers (C3), and six regulatory PyrI chains organized as three dimers (R2).

It carries out the reaction carbamoyl phosphate + L-aspartate = N-carbamoyl-L-aspartate + phosphate + H(+). Its pathway is pyrimidine metabolism; UMP biosynthesis via de novo pathway; (S)-dihydroorotate from bicarbonate: step 2/3. Its function is as follows. Catalyzes the condensation of carbamoyl phosphate and aspartate to form carbamoyl aspartate and inorganic phosphate, the committed step in the de novo pyrimidine nucleotide biosynthesis pathway. This chain is Aspartate carbamoyltransferase catalytic subunit, found in Prochlorococcus marinus (strain MIT 9515).